We begin with the raw amino-acid sequence, 201 residues long: 3-isopropylmalate dehydratase small subunit (201 aa).

This sequence belongs to the LeuD family. LeuD type 1 subfamily. Heterodimer of LeuC and LeuD.

The enzyme catalyses (2R,3S)-3-isopropylmalate = (2S)-2-isopropylmalate. Its pathway is amino-acid biosynthesis; L-leucine biosynthesis; L-leucine from 3-methyl-2-oxobutanoate: step 2/4. Its function is as follows. Catalyzes the isomerization between 2-isopropylmalate and 3-isopropylmalate, via the formation of 2-isopropylmaleate. The chain is 3-isopropylmalate dehydratase small subunit from Rhodopseudomonas palustris (strain ATCC BAA-98 / CGA009).